The following is a 327-amino-acid chain: MSLKSCLMWVLGEHDEPYRKARETILKLVGNTPLVRVKKCLPEDIPEDVEIWAKLESFNPGGSVKDRPALSMFLDALKRGLIKEGKVVIDATSGNTGIALAMVGAALGVPVELAMPANVSEERKKIIKAFGAKLYLTDPLEGTDGAILFVRELVQKYPEKYVYLDQYNNPANWKAHFYSTGIEIWNQTKGRITHFVAGIGTGGTIMGTGRRLKIYNPNIQVIGVQPAYPFHGIEGLKHIESSIKPGIFDETFLDRTIFVETEDAYYWARELAKKDAIFVGQSSGAALWACIQLARELAKKGEKGVIVTVFPDGGEKYLTTALFSDKD.

K65 carries the N6-(pyridoxal phosphate)lysine modification. Pyridoxal 5'-phosphate contacts are provided by residues N95, 200 to 204 (GTGGT), and S282.

It belongs to the cysteine synthase/cystathionine beta-synthase family. Pyridoxal 5'-phosphate serves as cofactor.

It catalyses the reaction O-acetyl-L-serine + hydrogen sulfide = L-cysteine + acetate. The protein operates within amino-acid biosynthesis; L-cysteine biosynthesis; L-cysteine from L-serine: step 2/2. In Aquifex aeolicus (strain VF5), this protein is Cysteine synthase (cysM).